The chain runs to 384 residues: tRNA-specific 2-thiouridylase MnmA (384 aa).

ATP-binding positions include 21–28 (GMSGGVDS) and M47. Positions 107–109 (NPD) are interaction with target base in tRNA. The active-site Nucleophile is the C112. A disulfide bond links C112 and C208. Residue G136 participates in ATP binding. The interval 158 to 160 (KDQ) is interaction with tRNA. C208 functions as the Cysteine persulfide intermediate in the catalytic mechanism. Positions 320–321 (RY) are interaction with tRNA.

The protein belongs to the MnmA/TRMU family.

The protein resides in the cytoplasm. It catalyses the reaction S-sulfanyl-L-cysteinyl-[protein] + uridine(34) in tRNA + AH2 + ATP = 2-thiouridine(34) in tRNA + L-cysteinyl-[protein] + A + AMP + diphosphate + H(+). Catalyzes the 2-thiolation of uridine at the wobble position (U34) of tRNA, leading to the formation of s(2)U34. The chain is tRNA-specific 2-thiouridylase MnmA from Chromohalobacter salexigens (strain ATCC BAA-138 / DSM 3043 / CIP 106854 / NCIMB 13768 / 1H11).